The sequence spans 514 residues: ATP synthase subunit alpha (514 aa).

170–177 provides a ligand contact to ATP; that stretch reads GDRQTGKT.

Belongs to the ATPase alpha/beta chains family. As to quaternary structure, F-type ATPases have 2 components, CF(1) - the catalytic core - and CF(0) - the membrane proton channel. CF(1) has five subunits: alpha(3), beta(3), gamma(1), delta(1), epsilon(1). CF(0) has three main subunits: a(1), b(2) and c(9-12). The alpha and beta chains form an alternating ring which encloses part of the gamma chain. CF(1) is attached to CF(0) by a central stalk formed by the gamma and epsilon chains, while a peripheral stalk is formed by the delta and b chains.

The protein resides in the cell inner membrane. The enzyme catalyses ATP + H2O + 4 H(+)(in) = ADP + phosphate + 5 H(+)(out). Functionally, produces ATP from ADP in the presence of a proton gradient across the membrane. The alpha chain is a regulatory subunit. In Psychrobacter arcticus (strain DSM 17307 / VKM B-2377 / 273-4), this protein is ATP synthase subunit alpha.